We begin with the raw amino-acid sequence, 1588 residues long: MVQLAKVPILGNDIIHVGYNIHDHLVETIIKHCPSSTYVICNDTNLSKVPYYQQLVLEFKASLPEGSRLLTYVVKPGETSKSRETKAQLEDYLLVEGCTRDTVMVAIGGGVIGDMIGFVASTFMRGVRVVQVPTSLLAMVDSSIGGKTAIDTPLGKNFIGAFWQPKFVLVDIKWLETLAKREFINGMAEVIKTACIWNADEFTRLESNASLFLNVVNGAKNVKVTNQLTNEIDEISNTDIEAMLDHTYKLVLESIKVKAEVVSSDERESSLRNLLNFGHSIGHAYEAILTPQALHGECVSIGMVKEAELSRYFGILSPTQVARLSKILVAYGLPVSPDEKWFKELTLHKKTPLDILLKKMSIDKKNEGSKKKVVILESIGKCYGDSAQFVSDEDLRFILTDETLVYPFKDIPADQQKVVIPPGSKSISNRALILAALGEGQCKIKNLLHSDDTKHMLTAVHELKGATISWEDNGETVVVEGHGGSTLSACADPLYLGNAGTASRFLTSLAALVNSTSSQKYIVLTGNARMQQRPIAPLVDSLRANGTKIEYLNNEGSLPIKVYTDSVFKGGRIELAATVSSQYVSSILMCAPYAEEPVTLALVGGKPISKLYVDMTIKMMEKFGINVETSTTEPYTYYIPKGHYINPSEYVIESDASSATYPLAFAAMTGTTVTVPNIGFESLQGDARFARDVLKPMGCKITQTATSTTVSGPPVGTLKPLKHVDMEPMTDAFLTACVVAAISHDSDPNSANTTTIEGIANQRVKECNRILAMATELAKFGVKTTELPDGIQVHGLNSIKDLKVPSDSSGPVGVCTYDDHRVAMSFSLLAGMVNSQNERDEVANPVRILERHCTGKTWPGWWDVLHSELGAKLDGAEPLECTSKKNSKKSVVIIGMRAAGKTTISKWCASALGYKLVDLDELFEQQHNNQSVKQFVVENGWEKFREEETRIFKEVIQNYGDDGYVFSTGGGIVESAESRKALKDFASSGGYVLHLHRDIEETIVFLQSDPSRPAYVEEIREVWNRREGWYKECSNFSFFAPHCSAEAEFQALRRSFSKYIATITGVREIEIPSGRSAFVCLTFDDLTEQTENLTPICYGCEAVEVRVDHLANYSADFVSKQLSILRKATDSIPIIFTVRTMKQGGNFPDEEFKTLRELYDIALKNGVEFLDLELTLPTDIQYEVINKRGNTKIIGSHHDFQGLYSWDDAEWENRFNQALTLDVDVVKFVGTAVNFEDNLRLEHFRDTHKNKPLIAVNMTSKGSISRVLNNVLTPVTSDLLPNSAAPGQLTVAQINKMYTSMGGIEPKELFVVGKPIGHSRSPILHNTGYEILGLPHKFDKFETESAQLVKEKLLDGNKNFGGAAVTIPLKLDIMQYMDELTDAAKVIGAVNTVIPLGNKKFKGDNTDWLGIRNALINNGVPEYVGHTAGLVIGAGGTSRAALYALHSLGCKKIFIINRTTSKLKPLIESLPSEFNIIGIESTKSIEEIKEHVGVAVSCVPADKPLDDELLSKLERFLVKGAHAAFVPTLLEAAYKPSVTPVMTISQDKYQWHVVPGSQMLVHQGVAQFEKWTGFKGPFKAIFDAVTKE.

A 3-dehydroquinate synthase region spans residues 1–392 (MVQLAKVPIL…YGDSAQFVSD (392 aa)). NAD(+)-binding positions include 43 to 45 (DTN), 78 to 81 (ETSK), 109 to 111 (GGV), and aspartate 114. A 7-phospho-2-dehydro-3-deoxy-D-arabino-heptonate-binding site is contributed by arginine 125. An NAD(+)-binding site is contributed by 134 to 135 (TS). 7-phospho-2-dehydro-3-deoxy-D-arabino-heptonate contacts are provided by aspartate 141 and lysine 147. NAD(+) is bound at residue lysine 156. Asparagine 157 lines the 7-phospho-2-dehydro-3-deoxy-D-arabino-heptonate pocket. NAD(+)-binding positions include 174-177 (WLET) and asparagine 185. Glutamate 189 contacts Zn(2+). 7-phospho-2-dehydro-3-deoxy-D-arabino-heptonate contacts are provided by residues 189 to 192 (EVIK) and lysine 258. Glutamate 268 serves as the catalytic Proton acceptor; for 3-dehydroquinate synthase activity. Residues 272 to 276 (RNLLN) and histidine 279 contribute to the 7-phospho-2-dehydro-3-deoxy-D-arabino-heptonate site. Residue histidine 279 participates in Zn(2+) binding. Catalysis depends on histidine 283, which acts as the Proton acceptor; for 3-dehydroquinate synthase activity. Positions 295 and 364 each coordinate 7-phospho-2-dehydro-3-deoxy-D-arabino-heptonate. Histidine 295 is a Zn(2+) binding site. Positions 405–871 (VYPFKDIPAD…WDVLHSELGA (467 aa)) are EPSP synthase. Cysteine 853 functions as the For EPSP synthase activity in the catalytic mechanism. The tract at residues 890-1080 (SVVIIGMRAA…IPSGRSAFVC (191 aa)) is shikimate kinase. 895–902 (GMRAAGKT) contacts ATP. A 3-dehydroquinase region spans residues 1081 to 1293 (LTFDDLTEQT…AAPGQLTVAQ (213 aa)). Histidine 1198 acts as the Proton acceptor; for 3-dehydroquinate dehydratase activity in catalysis. Catalysis depends on lysine 1227, which acts as the Schiff-base intermediate with substrate; for 3-dehydroquinate dehydratase activity. The segment at 1306-1588 (PKELFVVGKP…KAIFDAVTKE (283 aa)) is shikimate dehydrogenase.

This sequence in the N-terminal section; belongs to the sugar phosphate cyclases superfamily. Dehydroquinate synthase family. In the 2nd section; belongs to the EPSP synthase family. The protein in the 3rd section; belongs to the shikimate kinase family. It in the 4th section; belongs to the type-I 3-dehydroquinase family. This sequence in the C-terminal section; belongs to the shikimate dehydrogenase family. Homodimer. Zn(2+) is required as a cofactor.

It localises to the cytoplasm. The enzyme catalyses 7-phospho-2-dehydro-3-deoxy-D-arabino-heptonate = 3-dehydroquinate + phosphate. The catalysed reaction is 3-dehydroquinate = 3-dehydroshikimate + H2O. It carries out the reaction shikimate + NADP(+) = 3-dehydroshikimate + NADPH + H(+). It catalyses the reaction shikimate + ATP = 3-phosphoshikimate + ADP + H(+). The enzyme catalyses 3-phosphoshikimate + phosphoenolpyruvate = 5-O-(1-carboxyvinyl)-3-phosphoshikimate + phosphate. It participates in metabolic intermediate biosynthesis; chorismate biosynthesis; chorismate from D-erythrose 4-phosphate and phosphoenolpyruvate: step 2/7. Its pathway is metabolic intermediate biosynthesis; chorismate biosynthesis; chorismate from D-erythrose 4-phosphate and phosphoenolpyruvate: step 3/7. The protein operates within metabolic intermediate biosynthesis; chorismate biosynthesis; chorismate from D-erythrose 4-phosphate and phosphoenolpyruvate: step 4/7. It functions in the pathway metabolic intermediate biosynthesis; chorismate biosynthesis; chorismate from D-erythrose 4-phosphate and phosphoenolpyruvate: step 5/7. It participates in metabolic intermediate biosynthesis; chorismate biosynthesis; chorismate from D-erythrose 4-phosphate and phosphoenolpyruvate: step 6/7. Its function is as follows. The AROM polypeptide catalyzes 5 consecutive enzymatic reactions in prechorismate polyaromatic amino acid biosynthesis. This is Pentafunctional AROM polypeptide from Saccharomyces cerevisiae (strain ATCC 204508 / S288c) (Baker's yeast).